A 120-amino-acid polypeptide reads, in one-letter code: FK506-binding protein 1B (120 aa).

The disordered stretch occupies residues M1–N26. The PPIase FKBP-type domain maps to G20 to K115.

Belongs to the FKBP-type PPIase family. FKBP1 subfamily.

It catalyses the reaction [protein]-peptidylproline (omega=180) = [protein]-peptidylproline (omega=0). Its activity is regulated as follows. Inhibited by both FK506 and rapamycin. In terms of biological role, PPIases accelerate the folding of proteins. It catalyzes the cis-trans isomerization of proline imidic peptide bonds in oligopeptides. The chain is FK506-binding protein 1B (fpr1B) from Aspergillus fumigatus (strain ATCC MYA-4609 / CBS 101355 / FGSC A1100 / Af293) (Neosartorya fumigata).